The following is a 320-amino-acid chain: Lipoyl synthase (320 aa).

The segment at 1–26 is disordered; sequence MVTVVDRVTSRRLRHPEKMHRPDTSI. Residues cysteine 59, cysteine 64, cysteine 70, cysteine 85, cysteine 89, cysteine 92, and serine 298 each coordinate [4Fe-4S] cluster. Residues 71–287 form the Radical SAM core domain; sequence WSQRHASFMI…AKIGKVKGFL (217 aa).

Belongs to the radical SAM superfamily. Lipoyl synthase family. [4Fe-4S] cluster serves as cofactor.

The protein resides in the cytoplasm. It carries out the reaction [[Fe-S] cluster scaffold protein carrying a second [4Fe-4S](2+) cluster] + N(6)-octanoyl-L-lysyl-[protein] + 2 oxidized [2Fe-2S]-[ferredoxin] + 2 S-adenosyl-L-methionine + 4 H(+) = [[Fe-S] cluster scaffold protein] + N(6)-[(R)-dihydrolipoyl]-L-lysyl-[protein] + 4 Fe(3+) + 2 hydrogen sulfide + 2 5'-deoxyadenosine + 2 L-methionine + 2 reduced [2Fe-2S]-[ferredoxin]. It functions in the pathway protein modification; protein lipoylation via endogenous pathway; protein N(6)-(lipoyl)lysine from octanoyl-[acyl-carrier-protein]: step 2/2. Its function is as follows. Catalyzes the radical-mediated insertion of two sulfur atoms into the C-6 and C-8 positions of the octanoyl moiety bound to the lipoyl domains of lipoate-dependent enzymes, thereby converting the octanoylated domains into lipoylated derivatives. The protein is Lipoyl synthase of Bartonella quintana (strain Toulouse) (Rochalimaea quintana).